The primary structure comprises 161 residues: SsrA-binding protein (161 aa).

The span at 139–153 (RESIKRKEENRELDR) shows a compositional bias: basic and acidic residues. Residues 139–161 (RESIKRKEENRELDRLRKRRRQE) form a disordered region.

It belongs to the SmpB family.

It is found in the cytoplasm. In terms of biological role, required for rescue of stalled ribosomes mediated by trans-translation. Binds to transfer-messenger RNA (tmRNA), required for stable association of tmRNA with ribosomes. tmRNA and SmpB together mimic tRNA shape, replacing the anticodon stem-loop with SmpB. tmRNA is encoded by the ssrA gene; the 2 termini fold to resemble tRNA(Ala) and it encodes a 'tag peptide', a short internal open reading frame. During trans-translation Ala-aminoacylated tmRNA acts like a tRNA, entering the A-site of stalled ribosomes, displacing the stalled mRNA. The ribosome then switches to translate the ORF on the tmRNA; the nascent peptide is terminated with the 'tag peptide' encoded by the tmRNA and targeted for degradation. The ribosome is freed to recommence translation, which seems to be the essential function of trans-translation. The sequence is that of SsrA-binding protein from Syntrophobacter fumaroxidans (strain DSM 10017 / MPOB).